Reading from the N-terminus, the 162-residue chain is Peptide deformylase (162 aa).

Residues cysteine 86 and histidine 128 each contribute to the Fe cation site. Glutamate 129 is a catalytic residue. Histidine 132 provides a ligand contact to Fe cation.

The protein belongs to the polypeptide deformylase family. Fe(2+) is required as a cofactor.

It carries out the reaction N-terminal N-formyl-L-methionyl-[peptide] + H2O = N-terminal L-methionyl-[peptide] + formate. Its function is as follows. Removes the formyl group from the N-terminal Met of newly synthesized proteins. Requires at least a dipeptide for an efficient rate of reaction. N-terminal L-methionine is a prerequisite for activity but the enzyme has broad specificity at other positions. This Treponema pallidum (strain Nichols) protein is Peptide deformylase.